A 171-amino-acid chain; its full sequence is 3-hydroxydecanoyl-[acyl-carrier-protein] dehydratase (171 aa).

Residue histidine 70 is part of the active site.

This sequence belongs to the thioester dehydratase family. FabA subfamily. As to quaternary structure, homodimer.

It is found in the cytoplasm. The enzyme catalyses a (3R)-hydroxyacyl-[ACP] = a (2E)-enoyl-[ACP] + H2O. It catalyses the reaction (3R)-hydroxydecanoyl-[ACP] = (2E)-decenoyl-[ACP] + H2O. It carries out the reaction (2E)-decenoyl-[ACP] = (3Z)-decenoyl-[ACP]. The protein operates within lipid metabolism; fatty acid biosynthesis. Functionally, necessary for the introduction of cis unsaturation into fatty acids. Catalyzes the dehydration of (3R)-3-hydroxydecanoyl-ACP to E-(2)-decenoyl-ACP and then its isomerization to Z-(3)-decenoyl-ACP. Can catalyze the dehydratase reaction for beta-hydroxyacyl-ACPs with saturated chain lengths up to 16:0, being most active on intermediate chain length. The sequence is that of 3-hydroxydecanoyl-[acyl-carrier-protein] dehydratase from Photobacterium profundum (strain SS9).